Here is a 158-residue protein sequence, read N- to C-terminus: Snaclec flavocetin-A subunit alpha (158 aa).

Positions 1–23 (MERLIFVSFGLLVVILSLSGTGA) are cleaved as a signal peptide. Cystine bridges form between Cys27/Cys38, Cys55/Cys152, and Cys127/Cys144. The 120-residue stretch at 34-153 (YDRYCYQAFS…CGTENPFVCK (120 aa)) folds into the C-type lectin domain.

This sequence belongs to the snaclec family. Tetramer of heterodimers of alpha and beta subunits (alphabeta)(4); disulfide-linked. As to expression, expressed by the venom gland.

It is found in the secreted. Its function is as follows. Strong platelet aggregation inhibitor. Binds specifically to platelet glycoprotein Ibalpha (GP1BA) with high affinity and inhibits vWF-dependent platelet aggregation. Has also been observed to induce small agglutinates in washed platelets by binding to GPIb. This Protobothrops flavoviridis (Habu) protein is Snaclec flavocetin-A subunit alpha.